A 37-amino-acid polypeptide reads, in one-letter code: Large ribosomal subunit protein bL36 (37 aa).

The protein belongs to the bacterial ribosomal protein bL36 family.

This is Large ribosomal subunit protein bL36 from Rhodococcus erythropolis (strain PR4 / NBRC 100887).